The chain runs to 1338 residues: Thioester-containing protein 1 allele R1 (1338 aa).

Positions 1 to 21 (MWQFIRSRILTVIIFIGAAHG) are cleaved as a signal peptide. N-linked (GlcNAc...) asparagine glycans are attached at residues Asn68, Asn199, Asn242, Asn312, and Asn481. Positions 580-609 (ENEFDIFHSLGLFARTLDDILFDSANEKTG) are may contain the cleavage site. Residues Asn637, Asn728, and Asn813 are each glycosylated (N-linked (GlcNAc...) asparagine). The segment at residues 859-862 (CGEQ) is a cross-link (isoglutamyl cysteine thioester (Cys-Gln)). N-linked (GlcNAc...) asparagine glycosylation is found at Asn919 and Asn1065. 3 disulfides stabilise this stretch: Cys1217-Cys1283, Cys1326-Cys1338, and Cys1329-Cys1334.

Heterodimer of a TEP1-N chain and an TEP1-C chain non-covalently linked. Forms a complex composed of TEP1-N and TEP1-C heterodimer, LRIM1 and APL1C; the interaction stabilizes TEP1-N and TEP1-C heterodimer, prevents its binding to tissues while circulating in the hemolymph and protects the thioester bond from hydrolysis. Mature TEP1 and to a lesser extent full-length TEP1 interact with SPCLIP1; the interaction is induced by microbial infection. In terms of processing, in the hemolymph, the full-length protein is cleaved by an unknow protease into a 75kDa N-terminal (TEP1-N) chain and an 80kDa C-terminal (TEP1-C) chain which remain non-covalently linked. The TEP1-C chain contains the thioester bond which covalently binds to the pathogen surface. Cleavage is induced by bacterial infection or aseptic wound injury. During embryonic and pupal development, the cleaved form is the predominant form. N-glycosylated.

It is found in the secreted. Plays an essential role in the innate immune response against bacteria, fungi and protozoa infection. After proteolytic cleavage, the protein C-terminus binds covalently through a thioester bond to the pathogen surface resulting in pathogen clearance either by melanization or lysis. Initiate the recruitment and activation of a cascade of proteases, mostly of CLIP-domain serine proteases, which leads to the proteolytic cleavage of the prophenoloxidase (PPO) into active phenoloxidase (PO), the rate-limiting enzyme in melanin biosynthesis. In response to parasite P.berghei-mediated infection, binds to and mediates killing of ookinetes, as they egress from midgut epithelial cells into the basal labyrinth, by both lysis and melanization. During bacterial infection, binds to both Gram-positive and Gram-negative bacteria but only promotes phagocytosis of Gram-negative bacteria. Promotes the accumulation of SPCLIP1 onto the surface of P.berghei ookinetes and bacterium E.coli which leads to the melanization of the pathogen. Recruits CLIPA2 to bacteria surface. In response to bacterial infection, required for periostial hemocyte aggregation, but not for the aggregation of sessile hemocytes in non-periostial regions. During the late stage of fungus B.bassiana-mediated infection, required for the initiation of hyphae melanization by binding to the surface of hyphae and recruiting prophenoloxidase PPO to them. Plays a role in male fertility by binding to defective sperm cells and promoting their removal during spermatogenesis. In terms of biological role, binds to and mediates killing of parasite P.bergei ookinetes by lysis and melanization. Functionally, binds covalently through a thioester bond to the pathogen surface resulting in pathogen clearance. This chain is Thioester-containing protein 1 allele R1, found in Anopheles gambiae (African malaria mosquito).